The sequence spans 120 residues: NAD(P)H-quinone oxidoreductase subunit 3, chloroplastic (120 aa).

3 helical membrane-spanning segments follow: residues 9–29 (IFWA…FISG), 64–84 (MFAL…PWAM), and 88–108 (VLGV…IVGL).

This sequence belongs to the complex I subunit 3 family. As to quaternary structure, NDH is composed of at least 16 different subunits, 5 of which are encoded in the nucleus.

It localises to the plastid. The protein resides in the chloroplast thylakoid membrane. It catalyses the reaction a plastoquinone + NADH + (n+1) H(+)(in) = a plastoquinol + NAD(+) + n H(+)(out). The enzyme catalyses a plastoquinone + NADPH + (n+1) H(+)(in) = a plastoquinol + NADP(+) + n H(+)(out). NDH shuttles electrons from NAD(P)H:plastoquinone, via FMN and iron-sulfur (Fe-S) centers, to quinones in the photosynthetic chain and possibly in a chloroplast respiratory chain. The immediate electron acceptor for the enzyme in this species is believed to be plastoquinone. Couples the redox reaction to proton translocation, and thus conserves the redox energy in a proton gradient. The protein is NAD(P)H-quinone oxidoreductase subunit 3, chloroplastic of Panax ginseng (Korean ginseng).